A 101-amino-acid polypeptide reads, in one-letter code: MIPGELVTGDGEHELNAGRRTIELVVANTGDRPVQVGSHYHFHEVNDALSFDRAAARGFRLNIAAGTAVRFEPGQTRTVELVELAGARAVYGFQGKVMGPL.

Belongs to the urease beta subunit family. Heterotrimer of UreA (gamma), UreB (beta) and UreC (alpha) subunits. Three heterotrimers associate to form the active enzyme.

The protein resides in the cytoplasm. The enzyme catalyses urea + 2 H2O + H(+) = hydrogencarbonate + 2 NH4(+). The protein operates within nitrogen metabolism; urea degradation; CO(2) and NH(3) from urea (urease route): step 1/1. The sequence is that of Urease subunit beta from Burkholderia thailandensis (strain ATCC 700388 / DSM 13276 / CCUG 48851 / CIP 106301 / E264).